Reading from the N-terminus, the 335-residue chain is MKISRSLSTVEVHTGGEAFRIVTSGLPRLPGDTIVQRRAWLKENADEIRRALMFEPRGHADMYGGYLTEPVSPTADFGVIFLHNEGYSDHCGHGVIALSTAAVELGWVQRTVPETRVGIDAPCGFIEAFVQWDGEHAGPVRFVNVPSFIWRRDVSVDTPSFGTVTGDIAYGGAFYFYVDGAPFDLPVREAAVEKLIRFGAEVKAAANAKYPVVHPEIPEINHIYGTIIANAPRHPGSTQANCCVFADREVDRSPTGSGTGGRVAQLYQRGVLAAGDTLVNESIVGTVFKGRVLRETMVGDIPAVIPEVEGSAHICGFANWIVDERDPLTYGFLVR.

Catalysis depends on C91, which acts as the Proton acceptor. Substrate-binding positions include 92-93 (GH), D251, and 256-257 (GS).

It belongs to the proline racemase family.

The catalysed reaction is trans-3-hydroxy-L-proline = 1-pyrroline-2-carboxylate + H2O. Catalyzes the dehydration of trans-3-hydroxy-L-proline (t3LHyp) to Delta(1)-pyrroline-2-carboxylate (Pyr2C). Is likely involved in a degradation pathway that converts t3LHyp to L-proline. Displays neither trans-4-hydroxy-L-proline (t4LHyp) epimerase nor proline racemase activity. The polypeptide is Trans-3-hydroxy-L-proline dehydratase (Burkholderia ambifaria (strain ATCC BAA-244 / DSM 16087 / CCUG 44356 / LMG 19182 / AMMD) (Burkholderia cepacia (strain AMMD))).